The sequence spans 154 residues: Large ribosomal subunit protein uL15 (154 aa).

The interval 1 to 57 (MRFQDLHPQAGSRRRKRRIGRGIAAGQGASGGFGMRGQKSRSGRPTRPGFEGGQNPL) is disordered. Over residues 23–35 (IAAGQGASGGFGM) the composition is skewed to gly residues.

The protein belongs to the universal ribosomal protein uL15 family. As to quaternary structure, part of the 50S ribosomal subunit.

Functionally, binds to the 23S rRNA. The protein is Large ribosomal subunit protein uL15 of Thermosynechococcus vestitus (strain NIES-2133 / IAM M-273 / BP-1).